A 109-amino-acid polypeptide reads, in one-letter code: Parvalbumin, thymic (109 aa).

Ala-2 carries the post-translational modification N-acetylalanine. 2 EF-hand domains span residues 39–74 (KTPDQIKKVFGILDQDKSGFIEEEELQLFLKNFSSS) and 78–109 (LTSAETKAFLAAGDTDGDGKIGVEEFQSLVKA). Asp-52, Asp-54, Ser-56, Glu-63, Asp-91, Asp-93, Asp-95, Lys-97, and Glu-102 together coordinate Ca(2+).

Belongs to the parvalbumin family.

Its function is as follows. Appears to promote immune maturation in bone marrow cells in culture. Binds two calcium ions. This chain is Parvalbumin, thymic, found in Gallus gallus (Chicken).